Here is a 552-residue protein sequence, read N- to C-terminus: Glutamine--tRNA ligase (552 aa).

Residues 34–44 (PEPNGYLHIGH) carry the 'HIGH' region motif. ATP is bound by residues 35–37 (EPN) and 41–47 (HIGHAKS). L-glutamine is bound by residues Asp67 and Tyr212. ATP-binding positions include Thr231, 261-262 (RL), and 269-271 (MSK). The 'KMSKS' region signature appears at 268–272 (IMSKR).

The protein belongs to the class-I aminoacyl-tRNA synthetase family. In terms of assembly, monomer.

It is found in the cytoplasm. The catalysed reaction is tRNA(Gln) + L-glutamine + ATP = L-glutaminyl-tRNA(Gln) + AMP + diphosphate. The polypeptide is Glutamine--tRNA ligase (Aliivibrio salmonicida (strain LFI1238) (Vibrio salmonicida (strain LFI1238))).